A 341-amino-acid polypeptide reads, in one-letter code: MRVLGIETSCDETGVAIYDSEAGLLGHTLYSQVAVHAEYGGVVPELASRDHVRKLLPLVDGLLDNTDSRNKIDAIAYTSGPGLIGALLVGACFGRGLAMAWGCPAIGVHHMEGHLLAPMLEDAPPAFPFVALLVSGGHTQLVEVQGIGKYVLLGESLDDAAGEAFDKAAKMMDLDYPGGPNIAKLATKGDVSRFKFPRPMTDRPGLDFSFSGLKTFTLNTVAKYADETGLPDDQTCADIACAFQEAVVDTLVIKCRRALQQTKLNTLVIAGGVSANVRLRERLEAALAKINSQVYYARPEFCTDNGAMIAYAGCQRLLAGQVEPLAINVSPRWALDTLPAI.

His-110 and His-114 together coordinate Fe cation. Substrate contacts are provided by residues 133–137 (LVSGG), Asp-166, Gly-179, and Asn-276. A Fe cation-binding site is contributed by Asp-304.

It belongs to the KAE1 / TsaD family. The cofactor is Fe(2+).

The protein resides in the cytoplasm. It catalyses the reaction L-threonylcarbamoyladenylate + adenosine(37) in tRNA = N(6)-L-threonylcarbamoyladenosine(37) in tRNA + AMP + H(+). In terms of biological role, required for the formation of a threonylcarbamoyl group on adenosine at position 37 (t(6)A37) in tRNAs that read codons beginning with adenine. Is involved in the transfer of the threonylcarbamoyl moiety of threonylcarbamoyl-AMP (TC-AMP) to the N6 group of A37, together with TsaE and TsaB. TsaD likely plays a direct catalytic role in this reaction. In Saccharophagus degradans (strain 2-40 / ATCC 43961 / DSM 17024), this protein is tRNA N6-adenosine threonylcarbamoyltransferase.